Here is a 183-residue protein sequence, read N- to C-terminus: Ferritin heavy polypeptide-like 17 (183 aa).

Residues Gln11–Cys160 form the Ferritin-like diiron domain. Glu28, His66, Glu108, and Gln142 together coordinate Fe cation.

Belongs to the ferritin family. As to expression, testis specific. Also expressed in several cancers.

The polypeptide is Ferritin heavy polypeptide-like 17 (FTHL17) (Homo sapiens (Human)).